The primary structure comprises 593 residues: Glyoxylate carboligase (593 aa).

The protein belongs to the TPP enzyme family. Homotetramer. The cofactor is Mg(2+). Requires thiamine diphosphate as cofactor.

The catalysed reaction is 2 glyoxylate + H(+) = 2-hydroxy-3-oxopropanoate + CO2. Its pathway is organic acid metabolism; glycolate degradation; 3-phospho-D-glycerate from glycolate: step 2/4. Catalyzes the condensation of two molecules of glyoxylate to give 2-hydroxy-3-oxopropanoate (also termed tartronate semialdehyde). The polypeptide is Glyoxylate carboligase (gcl) (Escherichia coli O157:H7).